The chain runs to 145 residues: Large ribosomal subunit protein uL11 (145 aa).

The protein belongs to the universal ribosomal protein uL11 family. Part of the ribosomal stalk of the 50S ribosomal subunit. Interacts with L10 and the large rRNA to form the base of the stalk. L10 forms an elongated spine to which L12 dimers bind in a sequential fashion forming a multimeric L10(L12)X complex. Post-translationally, one or more lysine residues are methylated.

Its function is as follows. Forms part of the ribosomal stalk which helps the ribosome interact with GTP-bound translation factors. In Rickettsia prowazekii (strain Madrid E), this protein is Large ribosomal subunit protein uL11.